A 1362-amino-acid chain; its full sequence is Insulin receptor (1362 aa).

Residues 1 to 37 (MGQGVLRGEGHPNNNPNSKVGWKSLVGIITIFMLILC) form the signal peptide. The interval 38-184 (DQSDGKICYS…DSVEDNYIEL (147 aa)) is leucine-rich region. Cysteine 45 and cysteine 63 are joined by a disulfide. N-linked (GlcNAc...) asparagine glycans are attached at residues asparagine 53, asparagine 115, and asparagine 148. Disulfide bonds link cysteine 163-cysteine 192, cysteine 196-cysteine 219, cysteine 206-cysteine 225, cysteine 229-cysteine 238, cysteine 233-cysteine 244, cysteine 245-cysteine 253, cysteine 249-cysteine 262, cysteine 265-cysteine 274, cysteine 278-cysteine 290, cysteine 296-cysteine 321, cysteine 303-cysteine 311, cysteine 325-cysteine 338, cysteine 341-cysteine 345, and cysteine 349-cysteine 370. N-linked (GlcNAc...) asparagine glycosylation occurs at asparagine 332. 3 N-linked (GlcNAc...) asparagine glycosylation sites follow: asparagine 374, asparagine 434, and asparagine 455. Cysteine 472 and cysteine 505 form a disulfide bridge. 2 Fibronectin type-III domains span residues 508–629 (NLLT…TNET) and 633–730 (VPLD…IQKE). N-linked (GlcNAc...) asparagine glycans are attached at residues asparagine 551, asparagine 627, asparagine 642, asparagine 660, and asparagine 707. 2 disulfide bridges follow: cysteine 683-cysteine 896 and cysteine 822-cysteine 830. A disordered region spans residues 694–714 (WTPPTEIDENGNENQTEHTSV). Polar residues predominate over residues 705–714 (NENQTEHTSV). Residues 741 to 749 (ENYLHNEVF) are insulin-binding. The Extracellular segment spans residues 759-951 (DLFGVANGTL…PDHPHSNIVK (193 aa)). 2 N-linked (GlcNAc...) asparagine glycosylation sites follow: asparagine 765 and asparagine 779. Residues 849-944 (VVGPITYEYV…EQAYFQVPDH (96 aa)) enclose the Fibronectin type-III 3 domain. N-linked (GlcNAc...) asparagine glycosylation is found at asparagine 917 and asparagine 930. The chain crosses the membrane as a helical span at residues 952-972 (IITGPIIAVFLLLIVLVYCVV). The Cytoplasmic segment spans residues 973 to 1362 (QKKKDAEGPA…ILSLPRSSPS (390 aa)). Tyrosine 993 is subject to Phosphotyrosine; by autocatalysis. Residues 1012–1287 (INLLRELGQG…MLKDDLRPSF (276 aa)) enclose the Protein kinase domain. Residues serine 1022, lysine 1046, and 1093-1099 (ELMAHGD) each bind ATP. Aspartate 1148 functions as the Proton donor/acceptor in the catalytic mechanism. Residues 1152-1153 (RN) and aspartate 1166 each bind ATP. A phosphotyrosine; by autocatalysis mark is found at tyrosine 1174, tyrosine 1178, tyrosine 1179, tyrosine 1335, and tyrosine 1341.

It belongs to the protein kinase superfamily. Tyr protein kinase family. Insulin receptor subfamily. As to quaternary structure, tetramer of 2 alpha and 2 beta chains linked by disulfide bonds. The alpha chains contribute to the formation of the ligand-binding domain, while the beta chains carry the kinase domain. Autophosphorylated on tyrosine residues in response to insulin. As to expression, localized mainly to the envelope in oocytes. Localized to the animal hemisphere during early embryonic cleavage. Expressed during organogenesis in regions of ecto- and mesodermic origins. Expressed in the entire encephalon, the otic and optic vesicles, the gills, the somites and the pronephric tubules of the embryo. Also found in adult liver, muscle and regenerated forelimbs.

The protein localises to the cell membrane. The enzyme catalyses L-tyrosyl-[protein] + ATP = O-phospho-L-tyrosyl-[protein] + ADP + H(+). Its activity is regulated as follows. Autophosphorylation activates the kinase activity. Its function is as follows. Receptor tyrosine kinase which mediates actions of insulin. May be required for forelimb regeneration. In Xenopus laevis (African clawed frog), this protein is Insulin receptor (insr).